Consider the following 412-residue polypeptide: CCA-adding enzyme (412 aa).

ATP is bound by residues S41 and K44. 2 residues coordinate CTP: S41 and K44. The Mg(2+) site is built by D53, D55, and D106. Residues H129, K149, and Y158 each coordinate ATP. Positions 129, 149, and 158 each coordinate CTP.

The protein belongs to the tRNA nucleotidyltransferase/poly(A) polymerase family. Archaeal CCA-adding enzyme subfamily. As to quaternary structure, homodimer. Mg(2+) is required as a cofactor.

The enzyme catalyses a tRNA precursor + 2 CTP + ATP = a tRNA with a 3' CCA end + 3 diphosphate. The catalysed reaction is a tRNA with a 3' CCA end + 2 CTP + ATP = a tRNA with a 3' CCACCA end + 3 diphosphate. Its function is as follows. Catalyzes the addition and repair of the essential 3'-terminal CCA sequence in tRNAs without using a nucleic acid template. Adds these three nucleotides in the order of C, C, and A to the tRNA nucleotide-73, using CTP and ATP as substrates and producing inorganic pyrophosphate. tRNA 3'-terminal CCA addition is required both for tRNA processing and repair. Also involved in tRNA surveillance by mediating tandem CCA addition to generate a CCACCA at the 3' terminus of unstable tRNAs. While stable tRNAs receive only 3'-terminal CCA, unstable tRNAs are marked with CCACCA and rapidly degraded. The sequence is that of CCA-adding enzyme from Saccharolobus islandicus (strain M.16.27) (Sulfolobus islandicus).